The chain runs to 985 residues: Protein psiQ (985 aa).

The signal sequence occupies residues 1–20 (MMKYIYILLIFSLLFLKINS). The PA14 domain maps to 102-247 (QSTTNPNVYA…YDECGVCQGD (146 aa)). N-linked (GlcNAc...) asparagine glycosylation is found at Asn-127, Asn-309, Asn-424, Asn-491, Asn-517, Asn-527, Asn-592, Asn-620, Asn-649, Asn-696, Asn-735, Asn-767, Asn-786, Asn-824, and Asn-842.

Belongs to the prespore-cell-inducing factor family.

The protein resides in the secreted. This Dictyostelium discoideum (Social amoeba) protein is Protein psiQ (psiQ).